The primary structure comprises 807 residues: Dual specificity protein phosphatase PPS1 (807 aa).

Positions 585–783 (LPSRILRHLY…LFKWWKKHYN (199 aa)) constitute a Tyrosine-protein phosphatase domain. Residues 593-807 (LYLGSLDHAQ…GIAEVNMKYT (215 aa)) form a catalytic region. C725 serves as the catalytic Phosphocysteine intermediate.

Belongs to the protein-tyrosine phosphatase family. Non-receptor class dual specificity subfamily.

It carries out the reaction O-phospho-L-tyrosyl-[protein] + H2O = L-tyrosyl-[protein] + phosphate. It catalyses the reaction O-phospho-L-seryl-[protein] + H2O = L-seryl-[protein] + phosphate. The catalysed reaction is O-phospho-L-threonyl-[protein] + H2O = L-threonyl-[protein] + phosphate. In terms of biological role, protein phosphatase with specificity for serine, threonine, and tyrosine residues; has a role in the DNA synthesis phase of the cell cycle. The sequence is that of Dual specificity protein phosphatase PPS1 (PPS1) from Saccharomyces cerevisiae (strain ATCC 204508 / S288c) (Baker's yeast).